Consider the following 196-residue polypeptide: Holliday junction branch migration complex subunit RuvA (196 aa).

A domain I region spans residues 1-63 (MIEYIKGEIV…EDAHLLFGFA (63 aa)). The segment at 64-142 (EKIERELFLL…PMESMAGNLP (79 aa)) is domain II. Residues 142–146 (PEASV) form a flexible linker region. The domain III stretch occupies residues 147 to 196 (SNGAVTEEAVAALVMLGFQKAASQKAVSAILKGSPTLAVEQVIKTALRML).

Belongs to the RuvA family. Homotetramer. Forms an RuvA(8)-RuvB(12)-Holliday junction (HJ) complex. HJ DNA is sandwiched between 2 RuvA tetramers; dsDNA enters through RuvA and exits via RuvB. An RuvB hexamer assembles on each DNA strand where it exits the tetramer. Each RuvB hexamer is contacted by two RuvA subunits (via domain III) on 2 adjacent RuvB subunits; this complex drives branch migration. In the full resolvosome a probable DNA-RuvA(4)-RuvB(12)-RuvC(2) complex forms which resolves the HJ.

It is found in the cytoplasm. Functionally, the RuvA-RuvB-RuvC complex processes Holliday junction (HJ) DNA during genetic recombination and DNA repair, while the RuvA-RuvB complex plays an important role in the rescue of blocked DNA replication forks via replication fork reversal (RFR). RuvA specifically binds to HJ cruciform DNA, conferring on it an open structure. The RuvB hexamer acts as an ATP-dependent pump, pulling dsDNA into and through the RuvAB complex. HJ branch migration allows RuvC to scan DNA until it finds its consensus sequence, where it cleaves and resolves the cruciform DNA. This is Holliday junction branch migration complex subunit RuvA from Parabacteroides distasonis (strain ATCC 8503 / DSM 20701 / CIP 104284 / JCM 5825 / NCTC 11152).